Consider the following 387-residue polypeptide: Cytochrome b (387 aa).

Helical transmembrane passes span 32–52 (FGFF…LLAM), 76–98 (WLLR…VHML), 113–133 (LWVS…LGYV), 179–199 (FFSL…LHII), 225–245 (FTIK…AFVF), 290–310 (LGVL…FLTI), 325–345 (LFWS…QPAA), and 353–373 (LYST…IYMV). Heme b is bound by residues His-82 and His-96. Heme b contacts are provided by His-183 and His-197.

Belongs to the cytochrome b family. In terms of assembly, the main subunits of complex b-c1 are: cytochrome b, cytochrome c1 and the Rieske protein. It depends on heme b as a cofactor.

It localises to the mitochondrion inner membrane. In terms of biological role, component of the ubiquinol-cytochrome c reductase complex (complex III or cytochrome b-c1 complex) that is part of the mitochondrial respiratory chain. The b-c1 complex mediates electron transfer from ubiquinol to cytochrome c. Contributes to the generation of a proton gradient across the mitochondrial membrane that is then used for ATP synthesis. This Dictyostelium citrinum (Slime mold) protein is Cytochrome b (cytB).